Here is a 526-residue protein sequence, read N- to C-terminus: Keratin, type I cytoskeletal 10 (526 aa).

Positions 1–15 (MSVRYSSSKQYSSSR) are enriched in low complexity. Residues 1-29 (MSVRYSSSKQYSSSRSGGGGGGGSSLRIS) are disordered. The segment at 1 to 126 (MSVRYSSSKQ…FGDGGLISGN (126 aa)) is head. Residues Ser14, Ser16, Ser34, Ser45, Ser48, and Ser151 each carry the phosphoserine modification. The interval 127 to 162 (QKITMQNLNDRLASYLDKVRALEESNYELEVKIKEW) is coil 1A. In terms of domain architecture, IF rod spans 127-441 (QKITMQNLND…SLLEGEGSSG (315 aa)). The interval 163 to 183 (YEKYGNSRQREPRDYSKYYQT) is linker 1. The interval 184 to 275 (IDDLKNQIFN…KNHEEEMRDL (92 aa)) is coil 1B. The linker 12 stretch occupies residues 276 to 298 (QNVSTGDVNVEMNAAPGVDLTEL). Residues 299-437 (LNNMRSQYEQ…QTYRSLLEGE (139 aa)) form a coil 2 region. Residues 438 to 526 (GSSGGGSYGG…GESSSKGPRY (89 aa)) are tail. The span at 458–505 (GGGGYGGGSSSGGYGGGSSSGGGHGGSSGGSYGGGSSSGGGHGGGSSS) shows a compositional bias: gly residues. Residues 458–526 (GGGGYGGGSS…GESSSKGPRY (69 aa)) form a disordered region. Positions 506-526 (GGHKSTTTGSVGESSSKGPRY) are enriched in low complexity.

The protein belongs to the intermediate filament family. As to quaternary structure, heterotetramer of two type I and two type II keratins. Heterodimer with KRT1. Two heterodimers of KRT1 and KRT10 form a heterotetramer. The KRT10 subunit in the heterotetramer is probably disulfide-linked.

The protein localises to the secreted. It is found in the extracellular space. The protein resides in the cell surface. It localises to the cytoplasm. Plays a role in the establishment of the epidermal barrier on plantar skin. Involved in the maintenance of cell layer development and keratin filament bundles in suprabasal cells of the epithelium. The chain is Keratin, type I cytoskeletal 10 (KRT10) from Bos taurus (Bovine).